The chain runs to 117 residues: UPF0231 protein HI_1724 (117 aa).

It belongs to the UPF0231 family.

This chain is UPF0231 protein HI_1724, found in Haemophilus influenzae (strain ATCC 51907 / DSM 11121 / KW20 / Rd).